Consider the following 152-residue polypeptide: Regulatory protein RecX (152 aa).

The protein belongs to the RecX family.

The protein localises to the cytoplasm. Its function is as follows. Modulates RecA activity. The sequence is that of Regulatory protein RecX from Haemophilus influenzae (strain 86-028NP).